Consider the following 305-residue polypeptide: Plant-type L-asparaginase (305 aa).

Thr175 functions as the Nucleophile in the catalytic mechanism. Residues 202-205 and 224-227 each bind substrate; these read RVGD and TGLG.

It belongs to the Ntn-hydrolase family. In terms of assembly, heterotetramer of two alpha and two beta chains arranged as a dimer of alpha/beta heterodimers. The uncleaved protein forms homodimers. In terms of processing, autocleaved. Generates the alpha and beta subunits. The N-terminal residue of the beta subunit is thought to be responsible for the nucleophile hydrolase activity.

The catalysed reaction is L-asparagine + H2O = L-aspartate + NH4(+). Catalyzes the hydrolysis of L-asparagine into L-aspartate and ammonia. Does not exhibit glutaminase activity. The chain is Plant-type L-asparaginase from Pyrococcus abyssi (strain GE5 / Orsay).